The sequence spans 223 residues: UPF0441 protein YgiB (223 aa).

Residues 178–195 (TVPKTAMAPKPATTTTVT) are compositionally biased toward low complexity. The segment at 178–223 (TVPKTAMAPKPATTTTVTRGGFGESVAKQSTMQRSATGTSSRSMGG) is disordered. The span at 204–223 (AKQSTMQRSATGTSSRSMGG) shows a compositional bias: polar residues.

Belongs to the UPF0441 family.

The sequence is that of UPF0441 protein YgiB from Shigella dysenteriae serotype 1 (strain Sd197).